Reading from the N-terminus, the 498-residue chain is Lysine--tRNA ligase (498 aa).

The Mg(2+) site is built by Glu-408 and Glu-415.

Belongs to the class-II aminoacyl-tRNA synthetase family. In terms of assembly, homodimer. The cofactor is Mg(2+).

The protein resides in the cytoplasm. It carries out the reaction tRNA(Lys) + L-lysine + ATP = L-lysyl-tRNA(Lys) + AMP + diphosphate. In Listeria monocytogenes serovar 1/2a (strain ATCC BAA-679 / EGD-e), this protein is Lysine--tRNA ligase.